A 163-amino-acid chain; its full sequence is MPSFDIVSEVDLQEARNAVDNASREVESRFDFRNVEYSFELNDASKTIKVLSESDFQVNQLLDILRAKLLKRGIEGSSLDVPENIVHSGKTWFVEAKLKQGIESATQKKIVKMIKDSKLKVQAQIQGDEIRVTGKSRDDLQAVMAMVRGGDLGQPFQFKNFRD.

Belongs to the YajQ family.

Nucleotide-binding protein. In Shigella flexneri, this protein is Nucleotide-binding protein YajQ.